The primary structure comprises 310 residues: tRNA-cytidine(32) 2-sulfurtransferase (310 aa).

A PP-loop motif motif is present at residues 48–53; sequence SGGKDS. [4Fe-4S] cluster contacts are provided by C123, C126, and C214.

This sequence belongs to the TtcA family. As to quaternary structure, homodimer. It depends on Mg(2+) as a cofactor. The cofactor is [4Fe-4S] cluster.

Its subcellular location is the cytoplasm. The catalysed reaction is cytidine(32) in tRNA + S-sulfanyl-L-cysteinyl-[cysteine desulfurase] + AH2 + ATP = 2-thiocytidine(32) in tRNA + L-cysteinyl-[cysteine desulfurase] + A + AMP + diphosphate + H(+). It participates in tRNA modification. Its function is as follows. Catalyzes the ATP-dependent 2-thiolation of cytidine in position 32 of tRNA, to form 2-thiocytidine (s(2)C32). The sulfur atoms are provided by the cysteine/cysteine desulfurase (IscS) system. The polypeptide is tRNA-cytidine(32) 2-sulfurtransferase (Vibrio vulnificus (strain CMCP6)).